Reading from the N-terminus, the 379-residue chain is RIB43A-like with coiled-coils protein 1 (379 aa).

A disordered region spans residues 1 to 21; sequence MYNIKQSTDTKEAAAIEARRN. Residues 8 to 21 are compositionally biased toward basic and acidic residues; the sequence is TDTKEAAAIEARRN. 2 coiled-coil regions span residues 82 to 111 and 216 to 304; these read KEEA…GREF and NANK…QAEK.

Belongs to the RIB43A family. Microtubule inner protein component of sperm flagellar doublet microtubules.

The protein resides in the cytoplasm. Its subcellular location is the cytoskeleton. It is found in the flagellum axoneme. This Homo sapiens (Human) protein is RIB43A-like with coiled-coils protein 1 (RIBC1).